A 177-amino-acid polypeptide reads, in one-letter code: Ubiquinol-cytochrome c reductase iron-sulfur subunit (177 aa).

A helical transmembrane segment spans residues 18–38 (IVLTASSVAAVGAACAFWPII). One can recognise a Rieske domain in the interval 88–175 (ARAVKMSELI…YIFISDKKIR (88 aa)). 4 residues coordinate [2Fe-2S] cluster: cysteine 120, histidine 122, cysteine 139, and histidine 142. Cysteine 125 and cysteine 141 are disulfide-bonded.

This sequence belongs to the Rieske iron-sulfur protein family. As to quaternary structure, the main subunits of complex b-c1 are: cytochrome b, cytochrome c1 and the Rieske protein. Requires [2Fe-2S] cluster as cofactor.

It localises to the cell membrane. The catalysed reaction is a quinol + 2 Fe(III)-[cytochrome c](out) = a quinone + 2 Fe(II)-[cytochrome c](out) + 2 H(+)(out). In terms of biological role, component of the ubiquinol-cytochrome c reductase complex (complex III or cytochrome b-c1 complex), which is a respiratory chain that generates an electrochemical potential coupled to ATP synthesis. The chain is Ubiquinol-cytochrome c reductase iron-sulfur subunit (petA) from Rickettsia prowazekii (strain Madrid E).